We begin with the raw amino-acid sequence, 418 residues long: Voltage-gated ClC-type chloride channel ClcB (418 aa).

10 helical membrane-spanning segments follow: residues 5–25, 54–74, 146–166, 168–188, 222–242, 258–278, 291–311, 316–336, 352–372, and 380–400; these read LLIATVVGILAAFAVAGFRHA, LLTPALGGLAAGLLLMGWQKF, LWIACGAAAGMAAAYRAPLAG, LFIAEVLFGTMMLASLGPVII, ALIISTGVLAGLCGPLLLTLM, WQLALGGLIVGLLSLFTPAVW, APPLLMIIAGIFLCKLFAVLA, GAPGGVFTPTLFIGLAIGMLY, LLLGLTGMATLLAATTHAPIM, and MTGEYQLLPGLLIACVIASVI.

The protein belongs to the chloride channel (TC 2.A.49) family. ClcB subfamily.

The protein localises to the cell inner membrane. In terms of biological role, probably acts as an electrical shunt for an outwardly-directed proton pump that is linked to amino acid decarboxylation, as part of the extreme acid resistance (XAR) response. The chain is Voltage-gated ClC-type chloride channel ClcB from Escherichia coli (strain SMS-3-5 / SECEC).